The primary structure comprises 370 residues: 3,5-dihydroxyphenylacetyl-CoA synthase (370 aa).

The active site involves C158.

This sequence belongs to the thiolase-like superfamily. Chalcone/stilbene synthases family.

The catalysed reaction is 4 malonyl-CoA + 4 H(+) = (3,5-dihydroxyphenyl)acetyl-CoA + 4 CO2 + 3 CoA + H2O. The protein operates within antibiotic biosynthesis; vancomycin biosynthesis. Functionally, involved in the biosynthesis of the nonproteinogenic amino acid monomer (S)-3,5-dihydroxyphenylglycine (Dpg) responsible of the production of vancomycin and teicoplanin antibiotics. Catalyzes the Claisen condensation of four molecules of malonyl-CoA to yield 3,5-dihydroxyphenylacetyl-CoA (DPA-CoA) and three free coenzyme A (CoA). DpgA requires the presence of the dehydratases DpgB and DpgD to facilitate the aromatization of the DPA-S-DgpA or DPA-S-CoA intermediate. This is 3,5-dihydroxyphenylacetyl-CoA synthase (dpgA) from Amycolatopsis orientalis (Nocardia orientalis).